Here is a 393-residue protein sequence, read N- to C-terminus: SEC12-like protein 2 (393 aa).

The residue at position 2 (A2) is an N-acetylalanine. Residues 2–367 (ANQSTETNQP…EQKGDKPGVR (366 aa)) are Cytoplasmic-facing. Residues 41–67 (EKSEDDDESSSSSSSSRSCIVLSGGGG) are disordered. S43 is modified (phosphoserine). 4 WD repeats span residues 151-190 (RDVG…TLLN), 193-231 (QAHS…AVAS), 283-322 (IKKN…TIQV), and 326-367 (AHLG…PGVR). Residues 368-388 (WWLLVLLIVLLYVVAYYYMKA) traverse the membrane as a helical; Signal-anchor for type II membrane protein segment. The Lumenal portion of the chain corresponds to 389-393 (KGIIP).

In terms of assembly, interacts with BZIP28.

The protein localises to the endoplasmic reticulum membrane. Its subcellular location is the golgi apparatus. It localises to the cis-Golgi network membrane. Required for the formation or budding of transport vesicles from the ER. This Arabidopsis thaliana (Mouse-ear cress) protein is SEC12-like protein 2 (STL2P).